A 309-amino-acid polypeptide reads, in one-letter code: Aspartate carbamoyltransferase catalytic subunit (309 aa).

Positions 55 and 56 each coordinate carbamoyl phosphate. L-aspartate is bound at residue K85. Residues R106, H135, and Q138 each contribute to the carbamoyl phosphate site. L-aspartate-binding residues include R168 and R230. Positions 268 and 269 each coordinate carbamoyl phosphate.

The protein belongs to the aspartate/ornithine carbamoyltransferase superfamily. ATCase family. In terms of assembly, heterododecamer (2C3:3R2) of six catalytic PyrB chains organized as two trimers (C3), and six regulatory PyrI chains organized as three dimers (R2).

The catalysed reaction is carbamoyl phosphate + L-aspartate = N-carbamoyl-L-aspartate + phosphate + H(+). The protein operates within pyrimidine metabolism; UMP biosynthesis via de novo pathway; (S)-dihydroorotate from bicarbonate: step 2/3. Functionally, catalyzes the condensation of carbamoyl phosphate and aspartate to form carbamoyl aspartate and inorganic phosphate, the committed step in the de novo pyrimidine nucleotide biosynthesis pathway. This Aliivibrio fischeri (strain MJ11) (Vibrio fischeri) protein is Aspartate carbamoyltransferase catalytic subunit.